Reading from the N-terminus, the 23-residue chain is MWKKPAFIDLRLGLEVTLYISNR.

A cross-link (pyrroloquinoline quinone (Glu-Tyr)) is located at residues 15–19 (EVTLY).

This sequence belongs to the PqqA family.

It participates in cofactor biosynthesis; pyrroloquinoline quinone biosynthesis. Required for coenzyme pyrroloquinoline quinone (PQQ) biosynthesis. PQQ is probably formed by cross-linking a specific glutamate to a specific tyrosine residue and excising these residues from the peptide. This Klebsiella pneumoniae (strain 342) protein is Coenzyme PQQ synthesis protein A.